The sequence spans 66 residues: Probable Sec-independent protein translocase protein TatE (66 aa).

Residues 1-21 (MEGISITKLLVIAVLIVLLFG) traverse the membrane as a helical segment. Positions 46–66 (ETPAAKKSDGVEAAPRVENKE) are disordered.

It belongs to the TatA/E family. TatE subfamily.

The protein resides in the cell inner membrane. Functionally, part of the twin-arginine translocation (Tat) system that transports large folded proteins containing a characteristic twin-arginine motif in their signal peptide across membranes. TatE shares overlapping functions with TatA. The protein is Probable Sec-independent protein translocase protein TatE of Edwardsiella ictaluri (strain 93-146).